The primary structure comprises 374 residues: Homeobox protein knotted-1-like 13 (374 aa).

Positions 214 to 242 (TGASPGEGTGATMSDGEDDQADSEANMYD) are disordered. The ELK domain maps to 270–290 (ELKHELKQGYKEKLIDIREEI). The segment at residues 291–354 (LRKRRAGKLP…NQRKRNWHSN (64 aa)) is a DNA-binding region (homeobox; TALE-type). The disordered stretch occupies residues 347–374 (RKRNWHSNPSSSTSVKTKRKSNAGDNNS).

Belongs to the TALE/KNOX homeobox family. Isoforms 1 and 2 are expressed in roots, stems, shoot meristem, leaf blades, leaf sheaths and flowers. Isoform 3 is expressed in stems, shoot meristem, rachis, leaf blades and leaf sheaths.

It localises to the nucleus. Its function is as follows. Isoform 3 acts as a transcription activator, but isoforms 1 and 2 do not. This chain is Homeobox protein knotted-1-like 13 (OSH45), found in Oryza sativa subsp. japonica (Rice).